We begin with the raw amino-acid sequence, 251 residues long: Triosephosphate isomerase (251 aa).

Substrate is bound at residue 12 to 14 (NWK). The Electrophile role is filled by H98. Residue E168 is the Proton acceptor of the active site. Residues G174, S213, and 234–235 (GG) contribute to the substrate site.

Belongs to the triosephosphate isomerase family. As to quaternary structure, homodimer.

It is found in the cytoplasm. The catalysed reaction is D-glyceraldehyde 3-phosphate = dihydroxyacetone phosphate. Its pathway is carbohydrate biosynthesis; gluconeogenesis. It functions in the pathway carbohydrate degradation; glycolysis; D-glyceraldehyde 3-phosphate from glycerone phosphate: step 1/1. Involved in the gluconeogenesis. Catalyzes stereospecifically the conversion of dihydroxyacetone phosphate (DHAP) to D-glyceraldehyde-3-phosphate (G3P). The polypeptide is Triosephosphate isomerase (Bradyrhizobium diazoefficiens (strain JCM 10833 / BCRC 13528 / IAM 13628 / NBRC 14792 / USDA 110)).